Consider the following 469-residue polypeptide: Protein YfjI (469 aa).

The protein is Protein YfjI (yfjI) of Escherichia coli (strain K12).